The chain runs to 357 residues: Dihydroorotate dehydrogenase (quinone) (357 aa).

FMN contacts are provided by residues 66–70 (AGFDK) and Thr90. Lys70 contributes to the substrate binding site. Residue 115 to 119 (NRMGF) coordinates substrate. FMN is bound by residues Asn143 and Asn176. Asn176 contributes to the substrate binding site. Ser179 serves as the catalytic Nucleophile. Asn181 contributes to the substrate binding site. The FMN site is built by Lys212 and Thr240. 241-242 (NT) serves as a coordination point for substrate. FMN is bound by residues Gly264, Gly293, and 314 to 315 (YT).

Belongs to the dihydroorotate dehydrogenase family. Type 2 subfamily. In terms of assembly, monomer. FMN serves as cofactor.

The protein resides in the cell membrane. The catalysed reaction is (S)-dihydroorotate + a quinone = orotate + a quinol. The protein operates within pyrimidine metabolism; UMP biosynthesis via de novo pathway; orotate from (S)-dihydroorotate (quinone route): step 1/1. Functionally, catalyzes the conversion of dihydroorotate to orotate with quinone as electron acceptor. The chain is Dihydroorotate dehydrogenase (quinone) from Mycobacterium tuberculosis (strain ATCC 25177 / H37Ra).